Here is a 153-residue protein sequence, read N- to C-terminus: Large ribosomal subunit protein uL30 (153 aa).

This sequence belongs to the universal ribosomal protein uL30 family. As to quaternary structure, part of the 50S ribosomal subunit.

The polypeptide is Large ribosomal subunit protein uL30 (Methanospirillum hungatei JF-1 (strain ATCC 27890 / DSM 864 / NBRC 100397 / JF-1)).